Consider the following 654-residue polypeptide: Acetyl-coenzyme A synthetase (654 aa).

Residues 190 to 193 (RGGK) and Thr313 each bind CoA. Residues 389-391 (GEP), 413-418 (DTWWQT), Asp504, and Arg519 each bind ATP. Ser527 contributes to the CoA binding site. Arg530 serves as a coordination point for ATP. Positions 541 and 546 each coordinate Mg(2+). Lys613 is modified (N6-acetyllysine).

It belongs to the ATP-dependent AMP-binding enzyme family. Mg(2+) serves as cofactor. Post-translationally, acetylated. Deacetylation by the SIR2-homolog deacetylase activates the enzyme.

It carries out the reaction acetate + ATP + CoA = acetyl-CoA + AMP + diphosphate. Its function is as follows. Catalyzes the conversion of acetate into acetyl-CoA (AcCoA), an essential intermediate at the junction of anabolic and catabolic pathways. AcsA undergoes a two-step reaction. In the first half reaction, AcsA combines acetate with ATP to form acetyl-adenylate (AcAMP) intermediate. In the second half reaction, it can then transfer the acetyl group from AcAMP to the sulfhydryl group of CoA, forming the product AcCoA. This Leptospira borgpetersenii serovar Hardjo-bovis (strain L550) protein is Acetyl-coenzyme A synthetase.